A 117-amino-acid polypeptide reads, in one-letter code: Holo-[acyl-carrier-protein] synthase (117 aa).

Positions 8 and 59 each coordinate Mg(2+).

The protein belongs to the P-Pant transferase superfamily. AcpS family. Requires Mg(2+) as cofactor.

The protein resides in the cytoplasm. The catalysed reaction is apo-[ACP] + CoA = holo-[ACP] + adenosine 3',5'-bisphosphate + H(+). In terms of biological role, transfers the 4'-phosphopantetheine moiety from coenzyme A to a Ser of acyl-carrier-protein. This is Holo-[acyl-carrier-protein] synthase from Staphylococcus carnosus (strain TM300).